Consider the following 1363-residue polypeptide: Spike glycoprotein (1363 aa).

The N-terminal stretch at 1–13 is a signal peptide; it reads MFLILLISLPMAL. The Extracellular segment spans residues 14-1307; that stretch reads AVIGDLKCTT…GTYEYYVKWP (1294 aa). The BetaCoV S1-NTD domain occupies 15–298; it reads VIGDLKCTTV…DFMSEIKCKT (284 aa). Disulfide bonds link Cys21–Cys165, Cys160–Cys193, Cys172–Cys252, Cys286–Cys296, and Cys331–Cys356. Asn59 and Asn133 each carry an N-linked (GlcNAc...) asparagine; by host glycan. Asn198 carries an N-linked (GlcNAc...) asparagine; by host glycan. A BetaCoV S1-CTD domain is found at 329-617; sequence PDCNIEAWLN…DVNSGTTCST (289 aa). The N-linked (GlcNAc...) asparagine; by host glycan is linked to Asn359. 2 disulfide bridges follow: Cys374–Cys427 and Cys386–Cys615. Asn437, Asn649, Asn676, Asn696, Asn714, Asn739, and Asn788 each carry an N-linked (GlcNAc...) asparagine; by host glycan. 2 fusion peptide regions span residues 914 to 935 and 933 to 953; these read SAIEDLLFSKVKLSDVGFVEAY and EAYNNCTGGAEIRDLICVQSY. Residue Asn937 is glycosylated (N-linked (GlcNAc...) asparagine; by host). Cys938 and Cys949 are disulfide-bonded. Residues 1014-1064 are heptad repeat 1; it reads QKLIANAFNNALDAIQEGFDATNSALVKIQAVVNANAEALNNLLQQLSNRF. The stretch at 1043 to 1087 forms a coiled coil; sequence QAVVNANAEALNNLLQQLSNRFGAISSSLQEILSRLDALEAQRQI. N-linked (GlcNAc...) asparagine; by host glycans are attached at residues Asn1194, Asn1224, Asn1234, Asn1253, Asn1267, and Asn1288. The heptad repeat 2 stretch occupies residues 1258 to 1296; the sequence is APDLSLDYINVTFLDLQDEMNRLQEAIKLLNQSYINLKD. Residues 1269–1297 adopt a coiled-coil conformation; the sequence is TFLDLQDEMNRLQEAIKLLNQSYINLKDI. A helical transmembrane segment spans residues 1308-1328; that stretch reads WYVWLLIGFAGVAMLVLLFFI. Residues 1329 to 1363 are Cytoplasmic-facing; that stretch reads CCCTGCGTSCFKKCGGCCDDYTGHQELVIKTSHDD. Residues 1359–1363 carry the KxHxx motif; the sequence is TSHDD.

Belongs to the betacoronaviruses spike protein family. Homotrimer; each monomer consists of a S1 and a S2 subunit. The resulting peplomers protrude from the virus surface as spikes. In terms of processing, specific enzymatic cleavages in vivo yield mature proteins. The precursor is processed into S1 and S2 by host cell furin or another cellular protease to yield the mature S1 and S2 proteins. Additionally, a second cleavage leads to the release of a fusion peptide after viral attachment to host cell receptor. Post-translationally, the cytoplasmic Cys-rich domain is palmitoylated. Spike glycoprotein is digested within host endosomes.

Its subcellular location is the virion membrane. The protein localises to the host endoplasmic reticulum-Golgi intermediate compartment membrane. It is found in the host cell membrane. Attaches the virion to the cell membrane by interacting with host receptor, initiating the infection. Its function is as follows. Mediates fusion of the virion and cellular membranes by acting as a class I viral fusion protein. Under the current model, the protein has at least three conformational states: pre-fusion native state, pre-hairpin intermediate state, and post-fusion hairpin state. During viral and target cell membrane fusion, the coiled coil regions (heptad repeats) assume a trimer-of-hairpins structure, positioning the fusion peptide in close proximity to the C-terminal region of the ectodomain. The formation of this structure appears to drive apposition and subsequent fusion of viral and target cell membranes. In terms of biological role, acts as a viral fusion peptide which is unmasked following S2 cleavage occurring upon virus endocytosis. The sequence is that of Spike glycoprotein from Bos taurus (Bovine).